The following is a 202-amino-acid chain: Imidazoleglycerol-phosphate dehydratase (202 aa).

It belongs to the imidazoleglycerol-phosphate dehydratase family.

It localises to the cytoplasm. It catalyses the reaction D-erythro-1-(imidazol-4-yl)glycerol 3-phosphate = 3-(imidazol-4-yl)-2-oxopropyl phosphate + H2O. It participates in amino-acid biosynthesis; L-histidine biosynthesis; L-histidine from 5-phospho-alpha-D-ribose 1-diphosphate: step 6/9. This chain is Imidazoleglycerol-phosphate dehydratase, found in Sinorhizobium medicae (strain WSM419) (Ensifer medicae).